Reading from the N-terminus, the 527-residue chain is T-complex protein 1 subunit delta (527 aa).

The protein belongs to the TCP-1 chaperonin family. Heterooligomeric complex of about 850 to 900 kDa that forms two stacked rings, 12 to 16 nm in diameter.

The protein localises to the cytoplasm. Functionally, molecular chaperone; assists the folding of proteins upon ATP hydrolysis. Known to play a role, in vitro, in the folding of actin and tubulin. The sequence is that of T-complex protein 1 subunit delta (CCT4) from Yarrowia lipolytica (strain CLIB 122 / E 150) (Yeast).